Consider the following 366-residue polypeptide: Aminomethyltransferase (366 aa).

Belongs to the GcvT family. The glycine cleavage system is composed of four proteins: P, T, L and H.

It catalyses the reaction N(6)-[(R)-S(8)-aminomethyldihydrolipoyl]-L-lysyl-[protein] + (6S)-5,6,7,8-tetrahydrofolate = N(6)-[(R)-dihydrolipoyl]-L-lysyl-[protein] + (6R)-5,10-methylene-5,6,7,8-tetrahydrofolate + NH4(+). Functionally, the glycine cleavage system catalyzes the degradation of glycine. This Thermosynechococcus vestitus (strain NIES-2133 / IAM M-273 / BP-1) protein is Aminomethyltransferase.